The sequence spans 370 residues: Phospho-N-acetylmuramoyl-pentapeptide-transferase (370 aa).

The next 10 membrane-spanning stretches (helical) occupy residues 3 to 23 (QIIIAGAVSFLVAIFTTPVLI), 54 to 74 (GLAILAGILVAYVVAGLYGLL), 79 to 99 (AFTASGLLVLGLTLGLGAVGF), 118 to 138 (AKLISQLVLALLFGFLVLRFP), 161 to 181 (LAVGGTVIGTIVFLIFMYILI), 197 to 217 (LAAGVTAIVMGSYSLMTFWQF), 238 to 258 (LAVLAAAGLGGCLGFLWWNAA), 262 to 282 (IFMGDTGSLALGGLVAGISVT), 290 to 310 (IIIGALFVIETVSVVIQIVVF), and 341 to 361 (FWLLAAMAAMAGVAIFYGDWL).

This sequence belongs to the glycosyltransferase 4 family. MraY subfamily. Requires Mg(2+) as cofactor.

The protein resides in the cell membrane. It carries out the reaction UDP-N-acetyl-alpha-D-muramoyl-L-alanyl-gamma-D-glutamyl-meso-2,6-diaminopimeloyl-D-alanyl-D-alanine + di-trans,octa-cis-undecaprenyl phosphate = di-trans,octa-cis-undecaprenyl diphospho-N-acetyl-alpha-D-muramoyl-L-alanyl-D-glutamyl-meso-2,6-diaminopimeloyl-D-alanyl-D-alanine + UMP. It participates in cell wall biogenesis; peptidoglycan biosynthesis. Catalyzes the initial step of the lipid cycle reactions in the biosynthesis of the cell wall peptidoglycan: transfers peptidoglycan precursor phospho-MurNAc-pentapeptide from UDP-MurNAc-pentapeptide onto the lipid carrier undecaprenyl phosphate, yielding undecaprenyl-pyrophosphoryl-MurNAc-pentapeptide, known as lipid I. The polypeptide is Phospho-N-acetylmuramoyl-pentapeptide-transferase (Corynebacterium aurimucosum (strain ATCC 700975 / DSM 44827 / CIP 107346 / CN-1) (Corynebacterium nigricans)).